A 1372-amino-acid polypeptide reads, in one-letter code: DNA-directed RNA polymerase subunit beta' (1372 aa).

Zn(2+) is bound by residues C69, C71, C84, and C87. The Mg(2+) site is built by D460, D462, and D464. Positions 808, 882, 889, and 892 each coordinate Zn(2+).

It belongs to the RNA polymerase beta' chain family. The RNAP catalytic core consists of 2 alpha, 1 beta, 1 beta' and 1 omega subunit. When a sigma factor is associated with the core the holoenzyme is formed, which can initiate transcription. The cofactor is Mg(2+). Zn(2+) serves as cofactor.

It carries out the reaction RNA(n) + a ribonucleoside 5'-triphosphate = RNA(n+1) + diphosphate. DNA-dependent RNA polymerase catalyzes the transcription of DNA into RNA using the four ribonucleoside triphosphates as substrates. The polypeptide is DNA-directed RNA polymerase subunit beta' (Rickettsia conorii (strain ATCC VR-613 / Malish 7)).